A 312-amino-acid polypeptide reads, in one-letter code: DNA-directed RNA polymerase subunit alpha (312 aa).

An alpha N-terminal domain (alpha-NTD) region spans residues 1 to 226; it reads MIEFEKPRIE…EHLDIFVNLT (226 aa). The tract at residues 243–312 is alpha C-terminal domain (alpha-CTD); it reads KEKMLEMTIE…DLGLGLRKDD (70 aa).

It belongs to the RNA polymerase alpha chain family. In terms of assembly, homodimer. The RNAP catalytic core consists of 2 alpha, 1 beta, 1 beta' and 1 omega subunit. When a sigma factor is associated with the core the holoenzyme is formed, which can initiate transcription.

The catalysed reaction is RNA(n) + a ribonucleoside 5'-triphosphate = RNA(n+1) + diphosphate. DNA-dependent RNA polymerase catalyzes the transcription of DNA into RNA using the four ribonucleoside triphosphates as substrates. This is DNA-directed RNA polymerase subunit alpha from Enterococcus faecalis (strain ATCC 700802 / V583).